The chain runs to 90 residues: MSDAHGIARDQLRAFIERIERLEEEKKTIADDIKDVYGEAKSMGFDAKILRKVISIRKQDADERMEQEAILDTYLQALGMIPAAETEDAA.

The protein belongs to the UPF0335 family.

The sequence is that of UPF0335 protein Smed_2680 from Sinorhizobium medicae (strain WSM419) (Ensifer medicae).